The chain runs to 442 residues: Protein PHYTOCHROME KINASE SUBSTRATE 2 (442 aa).

The segment at 110 to 130 (IFVGPKQSSKNSSETPSLRSE) is disordered. The segment covering 121-130 (SSETPSLRSE) has biased composition (low complexity). Serine 239 and serine 245 each carry phosphoserine. Residues 394–442 (VSGDSYTSMNRTPSYVPRFPVEANPTSTETRRRISSSSVSHTQSPFLYT) are disordered. Residues 397 to 406 (DSYTSMNRTP) show a composition bias toward polar residues. The segment covering 428–442 (SSSSVSHTQSPFLYT) has biased composition (low complexity).

Belongs to the PKS family. Interacts with PKS1, RPT3, PHOT1 and PHOT2. As to expression, expressed in leaves, with the strongest expression on edges of the laminas. Not found in roots.

The protein resides in the cell membrane. Functionally, acts predominantly in the phot1 pathway. Involved in the leaf positioning and also in the phot2 pathway controlling the leaf flattening. Component of the network that modulates the very low-fluence response (VLFR) branch of phyA signaling. Regulates phytochrome-mediated photomorphogenesis and hypocotyl phototropism. May act by controlling auxin homeostasis. This chain is Protein PHYTOCHROME KINASE SUBSTRATE 2 (PKS2), found in Arabidopsis thaliana (Mouse-ear cress).